We begin with the raw amino-acid sequence, 93 residues long: Alpha-elapitoxin-Oh3a (93 aa).

Positions 1 to 21 (MKTLLLTLVVVTIVCLDLGYT) are cleaved as a signal peptide. 5 disulfide bridges follow: Cys24-Cys42, Cys35-Cys63, Cys48-Cys52, Cys67-Cys78, and Cys79-Cys84.

This sequence belongs to the three-finger toxin family. Long-chain subfamily. Type II alpha-neurotoxin sub-subfamily. Expressed by the venom gland.

The protein resides in the secreted. In terms of biological role, binds to muscular and neuronal nicotinic acetylcholine receptor (nAChR) and inhibits acetylcholine from binding to the receptor, thereby impairing neuromuscular and neuronal transmission. Pseudo-irreversibly inhibits twitches in chick biventer cervicis nerve-muscle preparations in a concentration-dependent manner. This is Alpha-elapitoxin-Oh3a from Ophiophagus hannah (King cobra).